A 369-amino-acid polypeptide reads, in one-letter code: Cytochrome c-type biogenesis protein CycH (369 aa).

The next 2 helical transmembrane spans lie at 7–23 and 91–111; these read FALM…WPLG and AAAV…YMPL. Residues 112-369 lie on the Periplasmic side of the membrane; that stretch reads GSPRLQDFPL…EGLKTLGLDG (258 aa).

The protein localises to the cell inner membrane. Functionally, required for the biogenesis of c-type cytochromes. Possible subunit of a heme lyase. This Bradyrhizobium diazoefficiens (strain JCM 10833 / BCRC 13528 / IAM 13628 / NBRC 14792 / USDA 110) protein is Cytochrome c-type biogenesis protein CycH (cycH).